The primary structure comprises 360 residues: Type 2 DNA topoisomerase 6 subunit A (360 aa).

In terms of domain architecture, Topo IIA-type catalytic spans 3–140; sequence EIERRCLRAL…FHIRPEEDGA (138 aa). Catalysis depends on Tyr97, which acts as the O-(5'-phospho-DNA)-tyrosine intermediate. Residues Glu193 and Asp245 each coordinate Mg(2+).

The protein belongs to the TOP6A family. Homodimer. Heterotetramer of two Top6A and two Top6B chains. Mg(2+) is required as a cofactor.

It carries out the reaction ATP-dependent breakage, passage and rejoining of double-stranded DNA.. Relaxes both positive and negative superturns and exhibits a strong decatenase activity. This is Type 2 DNA topoisomerase 6 subunit A from Archaeoglobus fulgidus (strain ATCC 49558 / DSM 4304 / JCM 9628 / NBRC 100126 / VC-16).